The chain runs to 497 residues: Protein FAM114A2 (497 aa).

Residues Met-1 to Ala-54 form a disordered region. Residues Leu-19–Ser-34 show a composition bias toward basic and acidic residues. Phosphoserine is present on residues Ser-84 and Ser-205. The interval Val-344 to Lys-364 is disordered.

Belongs to the FAM114 family.

In Mus musculus (Mouse), this protein is Protein FAM114A2 (Fam114a2).